Here is a 403-residue protein sequence, read N- to C-terminus: Betaine--homocysteine S-methyltransferase 1 (403 aa).

The Hcy-binding domain maps to 8 to 311; the sequence is KGLLERLDAG…YHTRAIAEEL (304 aa). Cys-214, Cys-296, and Cys-297 together coordinate Zn(2+).

Homotetramer. It depends on Zn(2+) as a cofactor.

The protein localises to the cytoplasm. The catalysed reaction is L-homocysteine + glycine betaine = N,N-dimethylglycine + L-methionine. It participates in amine and polyamine degradation; betaine degradation; sarcosine from betaine: step 1/2. Its pathway is amino-acid biosynthesis; L-methionine biosynthesis via de novo pathway; L-methionine from L-homocysteine (BhmT route): step 1/1. Functionally, involved in the regulation of homocysteine metabolism. Converts betaine and homocysteine to dimethylglycine and methionine, respectively. This reaction is also required for the irreversible oxidation of choline. In Xenopus laevis (African clawed frog), this protein is Betaine--homocysteine S-methyltransferase 1 (bhmt).